A 352-amino-acid polypeptide reads, in one-letter code: tRNA-specific 2-thiouridylase MnmA (352 aa).

Residues 6-13 (AMSGGVDS) and L32 each bind ATP. Catalysis depends on C101, which acts as the Nucleophile. The cysteines at positions 101 and 194 are disulfide-linked. Residue G125 participates in ATP binding. An interaction with tRNA region spans residues 144-146 (KDQ). The Cysteine persulfide intermediate role is filled by C194.

The protein belongs to the MnmA/TRMU family.

The protein localises to the cytoplasm. The catalysed reaction is S-sulfanyl-L-cysteinyl-[protein] + uridine(34) in tRNA + AH2 + ATP = 2-thiouridine(34) in tRNA + L-cysteinyl-[protein] + A + AMP + diphosphate + H(+). In terms of biological role, catalyzes the 2-thiolation of uridine at the wobble position (U34) of tRNA, leading to the formation of s(2)U34. The chain is tRNA-specific 2-thiouridylase MnmA from Frankia casuarinae (strain DSM 45818 / CECT 9043 / HFP020203 / CcI3).